The following is a 430-amino-acid chain: Nucleoporin NUP42 (430 aa).

The disordered stretch occupies residues 1 to 68 (MSAFGNPFTS…AFGMPQFGTN (68 aa)). The SXFG 1 repeat unit spans residues 2 to 5 (SAFG). Over residues 15–36 (NLSNTSGINPFTNNAASTNNMG) the composition is skewed to polar residues. 2 SAFGXPXFG repeats span residues 38–46 (SAFGRPSFG) and 58–66 (SAFGMPQFG). A compositionally biased stretch (low complexity) spans 45-68 (FGTANTMTGGTTTSAFGMPQFGTN). One copy of the SXFG 2 repeat lies at 78-81 (SAFG). 2 SAFGXPXFG repeats span residues 90–98 (SAFGAPAFG) and 112–120 (SAFGAPSFG). An interactions with CRM1 and GFD1 region spans residues 121-230 (STGFGAMAAT…QNTSTSSGTG (110 aa)). FG repeat units lie at residues 124 to 125 (FG) and 134 to 135 (FG). At S137 the chain carries Phosphoserine. The SAFGXPXFG 5 repeat unit spans residues 143–151 (SAFGQPAFG). SXFG repeat units lie at residues 168-171 (SAFG) and 182-185 (SPFG). The tract at residues 180-294 (TTSPFGSLQQ…QSPFSGGSGG (115 aa)) is disordered. Over residues 186 to 201 (SLQQNASQNASSTSSA) the composition is skewed to low complexity. Residues 200-208 (SAFGKPTFG) form an SAFGXPXFG 6 repeat. The span at 209–230 (AATNTQSPFGTIQNTSTSSGTG) shows a compositional bias: polar residues. SXFG repeat units follow at residues 215–218 (SPFG) and 232–235 (SPFG). Composition is skewed to polar residues over residues 237–252 (FGTN…NLQS) and 260–285 (PFGT…TNNQ). 2 SXFG repeats span residues 259–262 (SPFG) and 277–280 (SAFG). An FG 3 repeat occupies 296 to 297 (FG). The residue at position 298 (S298) is a Phosphoserine. One copy of the SXFG 9 repeat lies at 312 to 315 (SSFG). 3 FG repeats span residues 319 to 322 (FSFG), 339 to 340 (FG), and 361 to 364 (FGFG). The interval 319–346 (FSFGITPQNDANKVSQSNPSFGQTMPNT) is disordered. The segment covering 323–346 (ITPQNDANKVSQSNPSFGQTMPNT) has biased composition (polar residues). Positions 365 to 430 (QQQMNATNVN…DIPPPPALVA (66 aa)) are interaction with GLE1.

In terms of assembly, component of the nuclear pore complex (NPC). NPC constitutes the exclusive means of nucleocytoplasmic transport. NPCs allow the passive diffusion of ions and small molecules and the active, nuclear transport receptor-mediated bidirectional transport of macromolecules such as proteins, RNAs, ribonucleoparticles (RNPs), and ribosomal subunits across the nuclear envelope. Due to its 8-fold rotational symmetry, all subunits are present with 8 copies or multiples thereof. NUP42 interacts with the NUP82 subcomplex. It interacts directly with GLE1, and through its FG repeats with GFD1, the heterodimeric mRNA transport factor MEX67/MTR2, and the karyopherin CRM1.

It localises to the nucleus. Its subcellular location is the nuclear pore complex. The protein resides in the nucleus membrane. Its function is as follows. Functions as a component of the nuclear pore complex (NPC). NPC components, collectively referred to as nucleoporins (NUPs), can play the role of both NPC structural components and of docking or interaction partners for transiently associated nuclear transport factors. Active directional transport is assured by both, a Phe-Gly (FG) repeat affinity gradient for these transport factors across the NPC and a transport cofactor concentration gradient across the nuclear envelope (GSP1 and GSP2 GTPases associated predominantly with GTP in the nucleus, with GDP in the cytoplasm). NUP42 is specifically important for nuclear protein and mRNA export. The sequence is that of Nucleoporin NUP42 (NUP42) from Saccharomyces cerevisiae (strain ATCC 204508 / S288c) (Baker's yeast).